A 569-amino-acid polypeptide reads, in one-letter code: 2-succinyl-5-enolpyruvyl-6-hydroxy-3-cyclohexene-1-carboxylate synthase (569 aa).

It belongs to the TPP enzyme family. MenD subfamily. As to quaternary structure, homodimer. It depends on Mg(2+) as a cofactor. Mn(2+) serves as cofactor. Requires thiamine diphosphate as cofactor.

The enzyme catalyses isochorismate + 2-oxoglutarate + H(+) = 5-enolpyruvoyl-6-hydroxy-2-succinyl-cyclohex-3-ene-1-carboxylate + CO2. It participates in quinol/quinone metabolism; 1,4-dihydroxy-2-naphthoate biosynthesis; 1,4-dihydroxy-2-naphthoate from chorismate: step 2/7. It functions in the pathway quinol/quinone metabolism; menaquinone biosynthesis. Functionally, catalyzes the thiamine diphosphate-dependent decarboxylation of 2-oxoglutarate and the subsequent addition of the resulting succinic semialdehyde-thiamine pyrophosphate anion to isochorismate to yield 2-succinyl-5-enolpyruvyl-6-hydroxy-3-cyclohexene-1-carboxylate (SEPHCHC). The protein is 2-succinyl-5-enolpyruvyl-6-hydroxy-3-cyclohexene-1-carboxylate synthase of Shewanella sediminis (strain HAW-EB3).